The sequence spans 725 residues: Phosphoribosylformylglycinamidine synthase subunit PurL (725 aa).

H41 is an active-site residue. Positions 44 and 83 each coordinate ATP. E85 provides a ligand contact to Mg(2+). Substrate contacts are provided by residues 86 to 89 and R108; that span reads SHNH. The active-site Proton acceptor is H87. Residue D109 participates in Mg(2+) binding. Substrate is bound at residue Q231. D259 lines the Mg(2+) pocket. 303 to 305 is a binding site for substrate; it reads ESQ. ATP-binding residues include D485 and G522. N523 is a binding site for Mg(2+). S525 contributes to the substrate binding site.

Belongs to the FGAMS family. Monomer. Part of the FGAM synthase complex composed of 1 PurL, 1 PurQ and 2 PurS subunits.

Its subcellular location is the cytoplasm. It carries out the reaction N(2)-formyl-N(1)-(5-phospho-beta-D-ribosyl)glycinamide + L-glutamine + ATP + H2O = 2-formamido-N(1)-(5-O-phospho-beta-D-ribosyl)acetamidine + L-glutamate + ADP + phosphate + H(+). Its pathway is purine metabolism; IMP biosynthesis via de novo pathway; 5-amino-1-(5-phospho-D-ribosyl)imidazole from N(2)-formyl-N(1)-(5-phospho-D-ribosyl)glycinamide: step 1/2. Functionally, part of the phosphoribosylformylglycinamidine synthase complex involved in the purines biosynthetic pathway. Catalyzes the ATP-dependent conversion of formylglycinamide ribonucleotide (FGAR) and glutamine to yield formylglycinamidine ribonucleotide (FGAM) and glutamate. The FGAM synthase complex is composed of three subunits. PurQ produces an ammonia molecule by converting glutamine to glutamate. PurL transfers the ammonia molecule to FGAR to form FGAM in an ATP-dependent manner. PurS interacts with PurQ and PurL and is thought to assist in the transfer of the ammonia molecule from PurQ to PurL. In Thermus thermophilus (strain ATCC BAA-163 / DSM 7039 / HB27), this protein is Phosphoribosylformylglycinamidine synthase subunit PurL.